The primary structure comprises 59 residues: Small ribosomal subunit protein bS21 (59 aa).

Residues 40 to 59 are disordered; sequence KPSVKRKKKSEAARKRKSFR. Residues 43 to 59 show a composition bias toward basic residues; sequence VKRKKKSEAARKRKSFR.

The protein belongs to the bacterial ribosomal protein bS21 family.

The polypeptide is Small ribosomal subunit protein bS21 (Desulforamulus reducens (strain ATCC BAA-1160 / DSM 100696 / MI-1) (Desulfotomaculum reducens)).